Consider the following 126-residue polypeptide: Large ribosomal subunit protein bL12 (126 aa).

It belongs to the bacterial ribosomal protein bL12 family. Homodimer. Part of the ribosomal stalk of the 50S ribosomal subunit. Forms a multimeric L10(L12)X complex, where L10 forms an elongated spine to which 2 to 4 L12 dimers bind in a sequential fashion. Binds GTP-bound translation factors.

Forms part of the ribosomal stalk which helps the ribosome interact with GTP-bound translation factors. Is thus essential for accurate translation. The polypeptide is Large ribosomal subunit protein bL12 (Chlorobaculum tepidum (strain ATCC 49652 / DSM 12025 / NBRC 103806 / TLS) (Chlorobium tepidum)).